The primary structure comprises 840 residues: Axin-2 (840 aa).

Positions 1–75 (MSSAVLVTLL…EGRASPDSPL (75 aa)) are disordered. Residues 21-30 (APRPPVPGEE) carry the Tankyrase-binding motif motif. The span at 42 to 55 (KVQSTKPMPVSSNA) shows a compositional bias: polar residues. The segment covering 56–69 (RRNEDGLGEPEGRA) has biased composition (basic and acidic residues). Residues 81 to 200 (SLHSLLGDQD…LTSDIYLEYV (120 aa)) enclose the RGS domain. Disordered stretches follow at residues 300-363 (SELS…KEMT), 398-435 (IREDEEKEGSEQALSSRDGAPVQHPLALLPSGSYEEDP), 447-485 (LKTPGCQSPGVGRYSPRSRSPDHHHQHHHHQQCHTLLPT), 572-614 (RGGT…GDRS), and 715-745 (ASQQRDRNHSAAGQAGASPFANPSLAPEDHK). Residues 303 to 318 (SSDALTDDSMSMTDSS) are compositionally biased toward low complexity. Positions 327 to 413 (MGSKKQLQRE…KEGSEQALSS (87 aa)) are interaction with GSK3B. The segment at 413–478 (SRDGAPVQHP…HHHQHHHHQQ (66 aa)) is interaction with beta-catenin. Positions 468–478 (DHHHQHHHHQQ) are enriched in basic residues. In terms of domain architecture, DIX spans 758 to 840 (ASELVVTYFF…RILGKVERID (83 aa)).

In terms of assembly, interacts with glycogen synthase kinase-3 beta (GSK3B) and beta-catenin. The interaction between axin and beta-catenin occurs via the armadillo repeats contained in beta-catenin. Interacts with SMAD7 and RNF111. Interacts with ANKRD6. Interacts with SIAH1. Interacts with SIAH2. ADP-ribosylated by tankyrase TNKS and TNKS2. Poly-ADP-ribosylated protein is recognized by RNF146, followed by ubiquitination and subsequent activation of the Wnt signaling pathway. In terms of processing, ubiquitinated by RNF146 when poly-ADP-ribosylated, leading to its degradation and subsequent activation of the Wnt signaling pathway. Deubiquitinated by USP34, deubiquitinated downstream of beta-catenin stabilization step: deubiquitination is important Wnt signaling to positively regulate beta-catenin (CTNBB1)-mediated transcription. Post-translationally, probably phosphorylated by GSK3B and dephosphorylated by PP2A. In terms of tissue distribution, expressed in Tcf7-positive innate-like T-cells (at protein level).

The protein resides in the cytoplasm. Inhibitor of the Wnt signaling pathway. Down-regulates beta-catenin. Probably facilitate the phosphorylation of beta-catenin and APC by GSK3B. The sequence is that of Axin-2 from Mus musculus (Mouse).